The following is a 244-amino-acid chain: tRNA pseudouridine synthase A (244 aa).

The Nucleophile role is filled by Asp52. Tyr110 lines the substrate pocket.

Belongs to the tRNA pseudouridine synthase TruA family. In terms of assembly, homodimer.

The catalysed reaction is uridine(38/39/40) in tRNA = pseudouridine(38/39/40) in tRNA. Formation of pseudouridine at positions 38, 39 and 40 in the anticodon stem and loop of transfer RNAs. This is tRNA pseudouridine synthase A from Acetivibrio thermocellus (strain ATCC 27405 / DSM 1237 / JCM 9322 / NBRC 103400 / NCIMB 10682 / NRRL B-4536 / VPI 7372) (Clostridium thermocellum).